The sequence spans 126 residues: Fluoride-specific ion channel FluC (126 aa).

A run of 3 helical transmembrane segments spans residues 33–53 (LPLNVLIVNVIGAFILGVFIV), 64–84 (YSLFAAIGFCGSLTTMSSFAL), and 96–116 (GALAANIIVNVGLSIGALIGG). Na(+) contacts are provided by Gly-74 and Thr-77.

The protein belongs to the fluoride channel Fluc/FEX (TC 1.A.43) family.

It is found in the cell membrane. The catalysed reaction is fluoride(in) = fluoride(out). Na(+) is not transported, but it plays an essential structural role and its presence is essential for fluoride channel function. Fluoride-specific ion channel. Important for reducing fluoride concentration in the cell, thus reducing its toxicity. The sequence is that of Fluoride-specific ion channel FluC from Nitrosopumilus maritimus (strain SCM1).